The sequence spans 71 residues: Large ribosomal subunit protein bL31 (71 aa).

Positions 16, 18, 38, and 41 each coordinate Zn(2+).

The protein belongs to the bacterial ribosomal protein bL31 family. Type A subfamily. As to quaternary structure, part of the 50S ribosomal subunit. It depends on Zn(2+) as a cofactor.

Functionally, binds the 23S rRNA. The sequence is that of Large ribosomal subunit protein bL31 from Francisella tularensis subsp. novicida (strain U112).